Reading from the N-terminus, the 399-residue chain is MGSTAEDFVIKPMKGEHGFGAEIYGLDVNNITDEQVDRLRDTIQRYLLVVLKHQHDETPQKNWELLNRLSPDAPKFTPEEWALMYNPDPQGAGILPKLGYLVLPGTERLFLMGKGYQGEDHWGLKDIDIPEVFADAYYSKPLPHEDYHNGVARFQSWHIDGPSYKIDHPMFTSFRIIKFPEGEQTVDWADGSGLTKKVKAGRTAFFSSAKLYDMLTKEEQAIADYSWAEYMYFPYEWILRCRGNPQGLLVACEGREVPDEQMDAMPRNPEDQLVLPLVWVNPVTGGKHFHVQPNIVRRVFVRSGPDEEPKIIDDVKEVRDFFTKFQYRIIRPENIYVGPEEEGDQLLFFNWGVMHSKIDYPIEMGTRTTHQGWLAGDRPPKGPVPIPDPRARSSIYYQK.

His158 and Asp160 together coordinate Fe cation. Thr203 contacts 2-oxoglutarate. His355 lines the Fe cation pocket. Residue Arg367 participates in 2-oxoglutarate binding. A disordered region spans residues 371 to 399 (QGWLAGDRPPKGPVPIPDPRARSSIYYQK).

The protein belongs to the TfdA dioxygenase family. It depends on Fe(2+) as a cofactor.

Its pathway is mycotoxin biosynthesis. Its function is as follows. Alpha-ketoglutarate-dependent dioxygenase; part of the 2 gene clusters that mediate the biosynthesis of fusicoccins, diterpene glucosides that display phytohormone-like activity and function as potent activators of plasma membrane H(+)-ATPases in plants by modifying 14-3-3 proteins and cause the plant disease constriction canker. The first step in the pathway is performed by the fusicoccadiene synthase PaFS that possesses both prenyl transferase and terpene cyclase activity, converting isopentenyl diphosphate and dimethylallyl diphosphate into geranylgeranyl diphosphate (GGDP) and successively converting GGDP into fusicocca-2,10(14)-diene, a precursor for fusicoccin H. The second step is the oxidation at the C-8 position by the cytochrome P450 monooxygenase PaP450-2 to yield fusicocca-2,10(14)-diene-8-beta-ol. The cytochrome P450 monooxygenase PaP450-1 then catalyzes the hydroxylation at the C-16 position to produce fusicocca-2,10(14)-diene-8-beta,16-diol. The dioxygenase fc-dox then catalyzes the 16-oxydation of fusicocca-2,10(14)-diene-8-beta,16-diol to yield an aldehyde (8-beta-hydroxyfusicocca-1,10(14)-dien-16-al). The short-chain dehydrogenase/reductase fc-sdr catalyzes the reduction of the aldehyde to yield fusicocca-1,10(14)-diene-8-beta,16-diol. The next step is the hydroxylation at C-9 performed by the cytochrome P450 monooxygenase PaP450-3 that leads to fusicoccin H aglycon which is glycosylated to fusicoccin H by the O-glycosyltransferase PaGT. Hydroxylation at C-12 by the cytochrome P450 monooxygenase PaP450-4 leads then to the production of fusicoccin Q and is followed by methylation by the O-methyltransferase PaMT to yield fusicoccin P. Fusicoccin P is further converted to fusicoccin J via prenylation by the O-glucose prenyltransferase PaPT. Cytochrome P450 monooxygenase PaP450-5 then performs hydroxylation at C-19 to yield dideacetyl-fusicoccin A which is acetylated to 3'-O-deacetyl-fusicoccin A by the O-acetyltransferase PaAT-2. Finally, a another acetylation by the O-acetyltransferase PaAT-1 yields fusicoccin A. This is Alpha-ketoglutarate-dependent dioxygenase fc-dox from Phomopsis amygdali (Fusicoccum amygdali).